Reading from the N-terminus, the 351-residue chain is AT-hook motif nuclear-localized protein 10 (351 aa).

The interval 1 to 151 (MSGSETGLMA…RPPGSSSKRL (151 aa)) is disordered. A compositionally biased stretch (low complexity) spans 23 to 37 (HQQQQHSQAQPQQSQ). Polar residues predominate over residues 60-77 (SPPQQYQPNSAGENSVLN). The short motif at 97–105 (KKRRGRPRK) is the Bipartite nuclear localization signal element. DNA-binding regions (a.T hook) lie at residues 97–109 (KKRR…YGPD) and 138–149 (KKRGRPPGSSSK). The PPC domain maps to 159-301 (TGIGFTPHVL…QMGLSSPVLP (143 aa)). Composition is skewed to polar residues over residues 310-325 (MTPS…SESS) and 334-351 (IHQS…MPWK). A disordered region spans residues 310–351 (MTPSSPQSRGTMSESSCGGGHGSPIHQSTGGPYNNTINMPWK).

The protein resides in the nucleus. In terms of biological role, transcription factor that specifically binds AT-rich DNA sequences related to the nuclear matrix attachment regions (MARs). This chain is AT-hook motif nuclear-localized protein 10, found in Arabidopsis thaliana (Mouse-ear cress).